The sequence spans 413 residues: Hemolin (413 aa).

The signal sequence occupies residues M1–A18. Ig-like C2-type domains lie at P25–S112, P122–R211, P233–T322, and P327–N413. Intrachain disulfides connect C46-C97, C140-C199, C252-C305, and C349-C395. N283 carries N-linked (GlcNAc...) asparagine glycosylation.

Belongs to the hemolin family. In terms of tissue distribution, expressed in larval bristles.

It localises to the secreted. With respect to regulation, increased activity in presence of phospholipids (low concentrations) and calcium ions. Inhibited by PMSF. Not affected by EDTA and E-64. Functionally, bristle toxin involved in caterpillar defense by participating in hemorrhagic syndrome characterized by a consumptive coagulopathy. Exhibits procoagulant activity through selective factor X proteolytic activation. Activates factor X in a dose- and time-dependent manner but does not activate gamma-carboxyglutamic acid domainless factor X. Its activity does not depend on calcium ions. Also functions as a growth stimulator and an inhibitor of cellular death for endothelial cells. In vitro, increases proliferation of human umbilical vein endothelial cells (HUVEC) and inhibits the apoptosis induced by starvation. Also increases slightly the complement decay-accelerating factor (CD55), which protects cells from complement-mediated lysis. On the other hand, does not alter the release or expression of von Willebrand factor (VWF), tissue factor (F3), intercellular adhesion molecule-1 (ICAM1), interleukin-8 (CXCL8), and prostacyclin. Does not show fibrinolytic or fibrinogenolytic activities. In Lonomia obliqua (Moth), this protein is Hemolin.